The following is a 144-amino-acid chain: uncharacterized protein (144 aa).

The disordered stretch occupies residues 98 to 127 (PLADGATVDSQASENGEKEAQPTPPKEGLL).

This is an uncharacterized protein from Aedes vexans (Inland floodwater mosquito).